Reading from the N-terminus, the 331-residue chain is 6-phosphogluconolactonase (331 aa).

Lys287 carries the post-translational modification N6-acetyllysine.

It belongs to the cycloisomerase 2 family.

The enzyme catalyses 6-phospho-D-glucono-1,5-lactone + H2O = 6-phospho-D-gluconate + H(+). It participates in carbohydrate degradation; pentose phosphate pathway; D-ribulose 5-phosphate from D-glucose 6-phosphate (oxidative stage): step 2/3. Catalyzes the hydrolysis of 6-phosphogluconolactone to 6-phosphogluconate. The polypeptide is 6-phosphogluconolactonase (Escherichia coli (strain SMS-3-5 / SECEC)).